Here is a 238-residue protein sequence, read N- to C-terminus: Large ribosomal subunit protein uL1 (238 aa).

This sequence belongs to the universal ribosomal protein uL1 family. In terms of assembly, part of the 50S ribosomal subunit.

In terms of biological role, binds directly to 23S rRNA. The L1 stalk is quite mobile in the ribosome, and is involved in E site tRNA release. Its function is as follows. Protein L1 is also a translational repressor protein, it controls the translation of the L11 operon by binding to its mRNA. The protein is Large ribosomal subunit protein uL1 of Nostoc sp. (strain PCC 7120 / SAG 25.82 / UTEX 2576).